Reading from the N-terminus, the 96-residue chain is Aspartyl/glutamyl-tRNA(Asn/Gln) amidotransferase subunit C (96 aa).

This sequence belongs to the GatC family. Heterotrimer of A, B and C subunits.

It catalyses the reaction L-glutamyl-tRNA(Gln) + L-glutamine + ATP + H2O = L-glutaminyl-tRNA(Gln) + L-glutamate + ADP + phosphate + H(+). It carries out the reaction L-aspartyl-tRNA(Asn) + L-glutamine + ATP + H2O = L-asparaginyl-tRNA(Asn) + L-glutamate + ADP + phosphate + 2 H(+). Its function is as follows. Allows the formation of correctly charged Asn-tRNA(Asn) or Gln-tRNA(Gln) through the transamidation of misacylated Asp-tRNA(Asn) or Glu-tRNA(Gln) in organisms which lack either or both of asparaginyl-tRNA or glutaminyl-tRNA synthetases. The reaction takes place in the presence of glutamine and ATP through an activated phospho-Asp-tRNA(Asn) or phospho-Glu-tRNA(Gln). The protein is Aspartyl/glutamyl-tRNA(Asn/Gln) amidotransferase subunit C of Neisseria gonorrhoeae (strain ATCC 700825 / FA 1090).